A 197-amino-acid chain; its full sequence is Probable molybdenum cofactor guanylyltransferase (197 aa).

GTP contacts are provided by residues 6–8, lysine 18, aspartate 65, and aspartate 97; that span reads LAG. Aspartate 97 is a binding site for Mg(2+).

Belongs to the MobA family. It depends on Mg(2+) as a cofactor.

The protein resides in the cytoplasm. It carries out the reaction Mo-molybdopterin + GTP + H(+) = Mo-molybdopterin guanine dinucleotide + diphosphate. In terms of biological role, transfers a GMP moiety from GTP to Mo-molybdopterin (Mo-MPT) cofactor (Moco or molybdenum cofactor) to form Mo-molybdopterin guanine dinucleotide (Mo-MGD) cofactor. This Staphylococcus carnosus (strain TM300) protein is Probable molybdenum cofactor guanylyltransferase.